Consider the following 148-residue polypeptide: Receptor activity-modifying protein 1 (148 aa).

The first 26 residues, 1-26, serve as a signal peptide directing secretion; sequence MAPGLRGLPRRGLWLLLAHHLFMVTA. Intrachain disulfides connect C27–C82, C40–C72, and C57–C104. At 27–118 the chain is on the extracellular side; the sequence is CRDPDYGTLI…RALRDPPNSI (92 aa). Residues 119-140 traverse the membrane as a helical segment; that stretch reads LCPFIVLPITVTLLMTALVVWR. Residues 141–148 lie on the Cytoplasmic side of the membrane; sequence SKRTEGIV.

It belongs to the RAMP family. As to quaternary structure, heterodimer of CALCRL and RAMP1; the interaction induces allosteric modulation of CALCRL function and CGRP1/CALCA and CGRP2/CALCB ligand specificity. Heterodimer of CALCR and RAMP1; interaction forms the AMYR1 receptor complex for amylin/IAPP and CGRP1/CALCA ligands.

Its subcellular location is the cell membrane. Its function is as follows. Accessory protein that interacts with and modulates the function of G-protein coupled receptors including calcitonin gene-related peptide type 1 receptor (CALCRL) and calcitonin receptor (CALCR). Required for the transport of CALCRL to the plasma membrane. Together with CALCRL, form the receptor complex for the calcitonin gene-related peptides CGRP1/CALCA and CGRP2/CALCB. Together with CALCR, form the AMYR1 receptor complex for amylin/IAPP and CGRP1/CALCA. The sequence is that of Receptor activity-modifying protein 1 from Rattus norvegicus (Rat).